Reading from the N-terminus, the 60-residue chain is Large ribosomal subunit protein uL30 (60 aa).

The protein belongs to the universal ribosomal protein uL30 family. As to quaternary structure, part of the 50S ribosomal subunit.

The protein is Large ribosomal subunit protein uL30 of Leuconostoc mesenteroides subsp. mesenteroides (strain ATCC 8293 / DSM 20343 / BCRC 11652 / CCM 1803 / JCM 6124 / NCDO 523 / NBRC 100496 / NCIMB 8023 / NCTC 12954 / NRRL B-1118 / 37Y).